The following is a 67-amino-acid chain: Large ribosomal subunit protein bL35 (67 aa).

The protein belongs to the bacterial ribosomal protein bL35 family.

This chain is Large ribosomal subunit protein bL35, found in Sinorhizobium medicae (strain WSM419) (Ensifer medicae).